Consider the following 173-residue polypeptide: S-ribosylhomocysteine lyase (173 aa).

Fe cation is bound by residues His54, His58, and Cys128.

It belongs to the LuxS family. As to quaternary structure, homodimer. The cofactor is Fe cation.

It carries out the reaction S-(5-deoxy-D-ribos-5-yl)-L-homocysteine = (S)-4,5-dihydroxypentane-2,3-dione + L-homocysteine. In terms of biological role, involved in the synthesis of autoinducer 2 (AI-2) which is secreted by bacteria and is used to communicate both the cell density and the metabolic potential of the environment. The regulation of gene expression in response to changes in cell density is called quorum sensing. Catalyzes the transformation of S-ribosylhomocysteine (RHC) to homocysteine (HC) and 4,5-dihydroxy-2,3-pentadione (DPD). The polypeptide is S-ribosylhomocysteine lyase (Hydrogenovibrio crunogenus (strain DSM 25203 / XCL-2) (Thiomicrospira crunogena)).